A 1008-amino-acid chain; its full sequence is Pheromone-regulated membrane protein 10 (1008 aa).

3 disordered regions span residues methionine 1–glycine 273, lysine 342–proline 384, and lysine 477–glutamate 506. Residues aspartate 70–aspartate 85 show a composition bias toward low complexity. Polar residues predominate over residues glycine 95–histidine 111. Composition is skewed to acidic residues over residues alanine 116–phenylalanine 132 and glycine 143–glutamate 161. The segment covering glutamate 162–lysine 186 has biased composition (basic and acidic residues). The span at phenylalanine 188 to arginine 204 shows a compositional bias: polar residues. Positions asparagine 205–lysine 214 are enriched in basic and acidic residues. Residues arginine 215–arginine 225 are compositionally biased toward low complexity. Residues serine 226 to arginine 239 show a composition bias toward basic and acidic residues. Over residues glycine 346–isoleucine 364 the composition is skewed to polar residues. Positions glycine 483 to alanine 498 are enriched in basic residues. The next 10 helical transmembrane spans lie at serine 683–phenylalanine 703, tryptophan 707–valine 727, serine 736–isoleucine 756, phenylalanine 762–leucine 782, methionine 800–leucine 820, isoleucine 838–isoleucine 858, leucine 866–histidine 886, valine 892–serine 912, glycine 917–serine 937, and valine 978–phenylalanine 998.

This sequence belongs to the ThrE exporter (TC 2.A.79) family.

The protein localises to the membrane. The chain is Pheromone-regulated membrane protein 10 from Debaryomyces hansenii (strain ATCC 36239 / CBS 767 / BCRC 21394 / JCM 1990 / NBRC 0083 / IGC 2968) (Yeast).